The chain runs to 72 residues: ATP synthase subunit c (72 aa).

Transmembrane regions (helical) follow at residues 1–21 (MSLGVLAAAIAVGLGALGAGI) and 48–68 (MFIGVALVEALPIIGVVFSFI).

It belongs to the ATPase C chain family. F-type ATPases have 2 components, F(1) - the catalytic core - and F(0) - the membrane proton channel. F(1) has five subunits: alpha(3), beta(3), gamma(1), delta(1), epsilon(1). F(0) has three main subunits: a(1), b(2) and c(10-14). The alpha and beta chains form an alternating ring which encloses part of the gamma chain. F(1) is attached to F(0) by a central stalk formed by the gamma and epsilon chains, while a peripheral stalk is formed by the delta and b chains.

Its subcellular location is the cell membrane. F(1)F(0) ATP synthase produces ATP from ADP in the presence of a proton or sodium gradient. F-type ATPases consist of two structural domains, F(1) containing the extramembraneous catalytic core and F(0) containing the membrane proton channel, linked together by a central stalk and a peripheral stalk. During catalysis, ATP synthesis in the catalytic domain of F(1) is coupled via a rotary mechanism of the central stalk subunits to proton translocation. Functionally, key component of the F(0) channel; it plays a direct role in translocation across the membrane. A homomeric c-ring of between 10-14 subunits forms the central stalk rotor element with the F(1) delta and epsilon subunits. This is ATP synthase subunit c from Geobacillus kaustophilus (strain HTA426).